A 110-amino-acid chain; its full sequence is U1-lycotoxin-Ls1hh (110 aa).

An N-terminal signal peptide occupies residues 1 to 20 (MKFVLLFGVLLVTLFSYSSA). Residues 21-44 (EMLDDFDQADEDELLSLIEKEEAR) constitute a propeptide that is removed on maturation. 4 disulfides stabilise this stretch: Cys-47-Cys-62, Cys-54-Cys-71, Cys-61-Cys-89, and Cys-73-Cys-87.

It belongs to the neurotoxin 19 (CSTX) family. 03 subfamily. Expressed by the venom gland.

The protein localises to the secreted. The polypeptide is U1-lycotoxin-Ls1hh (Lycosa singoriensis (Wolf spider)).